Consider the following 211-residue polypeptide: MVRGKIEIKKIENVTSRQVTFSKRRSGLFKKAHELSVLCDAQVAAMIFSQKGRLYEFASSDIRNTIKRYAEYKREYFVAETHPIEQYVQGLKKEMVTMVKKIEVLEVHNRKMMGQSLDSCSVKELSEIATQIEKSLHMVRLRKAKLYEDELQKLKAKERELKDERVRLSLKKTIYTHLCQVGERPMGMPSGSKEKEDVETDLFIGFLKNRP.

The MADS-box domain maps to 1-61 (MVRGKIEIKK…GRLYEFASSD (61 aa)). Residues 88 to 187 (VQGLKKEMVT…LCQVGERPMG (100 aa)) form the K-box domain.

It is found in the nucleus. Its function is as follows. MADS-box transcription factor that acts with AGL42 and AGL71 in the control of flowering time. Promotes flowering at the shoot apical and axillary meristems. Seems to act through a gibberellin-dependent pathway. Interacts genetically with SOC1 and its expression is directly regulated by SOC1. This chain is MADS-box protein AGL72 (AGL72), found in Arabidopsis thaliana (Mouse-ear cress).